Consider the following 331-residue polypeptide: Phosphate acyltransferase (331 aa).

This sequence belongs to the PlsX family. Homodimer. Probably interacts with PlsY.

Its subcellular location is the cytoplasm. It carries out the reaction a fatty acyl-[ACP] + phosphate = an acyl phosphate + holo-[ACP]. It participates in lipid metabolism; phospholipid metabolism. Catalyzes the reversible formation of acyl-phosphate (acyl-PO(4)) from acyl-[acyl-carrier-protein] (acyl-ACP). This enzyme utilizes acyl-ACP as fatty acyl donor, but not acyl-CoA. The sequence is that of Phosphate acyltransferase from Lactococcus lactis subsp. cremoris (strain SK11).